Here is an 878-residue protein sequence, read N- to C-terminus: Leucine--tRNA ligase (878 aa).

The 'HIGH' region motif lies at 56 to 66 (PYPSGKLHMGH). A 'KMSKS' region motif is present at residues 630–634 (KMSKS). Position 633 (lysine 633) interacts with ATP.

This sequence belongs to the class-I aminoacyl-tRNA synthetase family.

It localises to the cytoplasm. The enzyme catalyses tRNA(Leu) + L-leucine + ATP = L-leucyl-tRNA(Leu) + AMP + diphosphate. The chain is Leucine--tRNA ligase from Prochlorococcus marinus (strain MIT 9303).